The primary structure comprises 446 residues: MGVIDNKEQRSLDEINSTIEFNDSQRTSQKFLAFLGPGLLVAVGYMDPGNWITSMQGGAQFGYTLLFVILISSLSAMLLQSMTVRLGIATDKDLAQMTRHYLNKPTAIIFWVIAELAIIATDIAEVIGSAIALDLLFNIPLIIGALITVFDVFLLLFIMKFGFRKIEAIVGTLIFTVLMIFVFEVYISSPNLIEILNGFVPHYQIIANHSILYIALGIIGATIMPHNLYLHSSIVQSRKYNRHSFTEKAQAIKFATIDSNIQLSIAFIVNCLLLVLGAALFYGVNSNNIGGFYDLYQALRTQPVLGVVMGSIMSTLFAIALLASGQNSTITGTLAGQIVMEGFLKLSIPNWMRRLVTRSLAVIPVLLCLVIFRGNESKMEQLLVFSQVFLSIALPFSLIPLQLATSNEKLMGPFKNKKWVNICAWGLIIILSFLNIYLIIETFKEL.

11 consecutive transmembrane segments (helical) span residues 32 to 52 (LAFL…GNWI), 59 to 79 (AQFG…AMLL), 107 to 127 (AIIF…AEVI), 139 to 159 (IPLI…LFIM), 168 to 188 (AIVG…VYIS), 205 to 225 (IIAN…TIMP), 264 to 284 (SIAF…FYGV), 303 to 323 (PVLG…ALLA), 355 to 375 (LVTR…FRGN), 381 to 401 (QLLV…LIPL), and 420 to 440 (VNIC…YLII).

This sequence belongs to the NRAMP family.

It is found in the cell membrane. Functionally, h(+)-stimulated, divalent metal cation uptake system. This Staphylococcus haemolyticus (strain JCSC1435) protein is Divalent metal cation transporter MntH.